Here is a 1041-residue protein sequence, read N- to C-terminus: Histone deacetylase complex subunit SAP130-B (1041 aa).

Disordered stretches follow at residues 1-62, 111-131, 572-592, 614-769, and 806-852; these read MSSQ…QEPV, KSTM…SAVP, TNQG…EPKS, TPAG…PSGA, and VLAN…DEER. The span at 18 to 30 shows a compositional bias: polar residues; that stretch reads VSNSGASVGQNVQ. Positions 33 to 42 are enriched in basic and acidic residues; the sequence is EVAREIDVQS. Positions 576 to 592 are enriched in low complexity; it reads VQTSSVSSQQASSEPKS. Residues 614–641 show a composition bias toward polar residues; the sequence is TPAGTTVMQSHSQSPGIGSSPAQGSSPR. The segment covering 707-728 has biased composition (low complexity); it reads PGAADQPSAAASLPSSHHPTAA.

It belongs to the SAP130 family.

It localises to the nucleus. Its function is as follows. Acts as a transcriptional repressor. This Xenopus laevis (African clawed frog) protein is Histone deacetylase complex subunit SAP130-B (sap130-b).